A 178-amino-acid chain; its full sequence is Large ribosomal subunit protein uL6 (178 aa).

This sequence belongs to the universal ribosomal protein uL6 family. As to quaternary structure, part of the 50S ribosomal subunit.

Functionally, this protein binds to the 23S rRNA, and is important in its secondary structure. It is located near the subunit interface in the base of the L7/L12 stalk, and near the tRNA binding site of the peptidyltransferase center. The polypeptide is Large ribosomal subunit protein uL6 (Corynebacterium jeikeium (strain K411)).